The following is a 258-amino-acid chain: tRNA pseudouridine synthase A (258 aa).

The active-site Nucleophile is aspartate 53. Tyrosine 111 lines the substrate pocket.

This sequence belongs to the tRNA pseudouridine synthase TruA family. Homodimer.

It catalyses the reaction uridine(38/39/40) in tRNA = pseudouridine(38/39/40) in tRNA. Functionally, formation of pseudouridine at positions 38, 39 and 40 in the anticodon stem and loop of transfer RNAs. The protein is tRNA pseudouridine synthase A of Streptococcus agalactiae serotype Ia (strain ATCC 27591 / A909 / CDC SS700).